Here is a 32-residue protein sequence, read N- to C-terminus: Periplasmic [NiFe] hydrogenase small subunit (32 aa).

C17 and C20 together coordinate [4Fe-4S] cluster.

The protein belongs to the [NiFe]/[NiFeSe] hydrogenase small subunit family. Heterodimer of a large and a small subunit. [3Fe-4S] cluster is required as a cofactor. It depends on [4Fe-4S] cluster as a cofactor.

The protein localises to the periplasm. It catalyses the reaction 2 Fe(III)-[cytochrome c3] + H2 = 2 Fe(II)-[cytochrome c3] + 2 H(+). The chain is Periplasmic [NiFe] hydrogenase small subunit (hydA) from Desulfovibrio multispirans.